The chain runs to 245 residues: 1-(5-phosphoribosyl)-5-[(5-phosphoribosylamino)methylideneamino] imidazole-4-carboxamide isomerase (245 aa).

Residue Asp7 is the Proton acceptor of the active site. The active-site Proton donor is the Asp129.

It belongs to the HisA/HisF family.

The protein resides in the cytoplasm. The catalysed reaction is 1-(5-phospho-beta-D-ribosyl)-5-[(5-phospho-beta-D-ribosylamino)methylideneamino]imidazole-4-carboxamide = 5-[(5-phospho-1-deoxy-D-ribulos-1-ylimino)methylamino]-1-(5-phospho-beta-D-ribosyl)imidazole-4-carboxamide. The protein operates within amino-acid biosynthesis; L-histidine biosynthesis; L-histidine from 5-phospho-alpha-D-ribose 1-diphosphate: step 4/9. This Salmonella heidelberg (strain SL476) protein is 1-(5-phosphoribosyl)-5-[(5-phosphoribosylamino)methylideneamino] imidazole-4-carboxamide isomerase.